The primary structure comprises 119 residues: Large ribosomal subunit protein bL20 (119 aa).

It belongs to the bacterial ribosomal protein bL20 family.

Its function is as follows. Binds directly to 23S ribosomal RNA and is necessary for the in vitro assembly process of the 50S ribosomal subunit. It is not involved in the protein synthesizing functions of that subunit. The sequence is that of Large ribosomal subunit protein bL20 from Aromatoleum aromaticum (strain DSM 19018 / LMG 30748 / EbN1) (Azoarcus sp. (strain EbN1)).